The chain runs to 350 residues: Small ribosomal subunit biogenesis GTPase RsgA (350 aa).

A compositionally biased stretch (polar residues) spans 1–17 (MSKNKLSKGQQRRVNAN). Residues 1-33 (MSKNKLSKGQQRRVNANHQRRLKTSKEKPDYDD) form a disordered region. The CP-type G domain maps to 104 to 273 (TSVLTRPDFY…VIDSPGVREF (170 aa)). Residues 160–163 (NKID) and 214–222 (GQSGVGKSS) each bind GTP. Residues Cys-297, Cys-302, His-304, and Cys-310 each coordinate Zn(2+).

Belongs to the TRAFAC class YlqF/YawG GTPase family. RsgA subfamily. Monomer. Associates with 30S ribosomal subunit, binds 16S rRNA. Zn(2+) is required as a cofactor.

Its subcellular location is the cytoplasm. In terms of biological role, one of several proteins that assist in the late maturation steps of the functional core of the 30S ribosomal subunit. Helps release RbfA from mature subunits. May play a role in the assembly of ribosomal proteins into the subunit. Circularly permuted GTPase that catalyzes slow GTP hydrolysis, GTPase activity is stimulated by the 30S ribosomal subunit. This Escherichia coli O6:H1 (strain CFT073 / ATCC 700928 / UPEC) protein is Small ribosomal subunit biogenesis GTPase RsgA.